The chain runs to 81 residues: Conotoxin Vc6.7 (81 aa).

The N-terminal stretch at 1-19 (MEKLTILLLVAAVLMSIQA) is a signal peptide. The propeptide occupies 20–44 (VNQEKHQRAKMNLLSKRKPPAERWW). Intrachain disulfides connect C49–C63, C56–C67, and C62–C72.

The protein belongs to the conotoxin O2 superfamily. In terms of tissue distribution, expressed by the venom duct.

Its subcellular location is the secreted. Its function is as follows. Inhibits voltage-gated ion channels. The protein is Conotoxin Vc6.7 of Conus victoriae (Queen Victoria cone).